The chain runs to 165 residues: Protein SprT (165 aa).

The region spanning 10–158 (EACYRQAEHF…CRRCKATLVF (149 aa)) is the SprT-like domain. A Zn(2+)-binding site is contributed by H69. Residue E70 is part of the active site. H73 contacts Zn(2+).

Belongs to the SprT family. It depends on Zn(2+) as a cofactor.

Its subcellular location is the cytoplasm. The chain is Protein SprT from Pseudomonas aeruginosa (strain LESB58).